A 673-amino-acid polypeptide reads, in one-letter code: Armadillo repeat-containing protein 8 (673 aa).

ARM repeat units follow at residues 51 to 92 (NKQK…SLSM), 95 to 134 (ENNI…TVFI), 138 to 176 (TPVQ…HCCK), 178 to 217 (PEHQ…VLAY), 225 to 265 (TLVN…YMCR), 269 to 309 (IRTE…YLME), 313 to 352 (ELQR…HDLK), 374 to 413 (DIRK…SLSR), 416 to 455 (QQLR…NLLL), 458 to 497 (SPSK…NMAF), 501 to 540 (QKVK…NLLS), 543 to 585 (PHID…NIAD), 588 to 627 (TAKE…NLIW), and 634 to 673 (QERQ…QYLA).

Identified in the CTLH complex that contains at least MAEA, RMND5A (or alternatively its paralog RMND5B), GID8, WDR26, and RANBP9 and/or RANBP10; ARMC8 has an ancillary role in the complex.

The protein localises to the nucleus. It localises to the cytoplasm. Functionally, component of the CTLH E3 ubiquitin-protein ligase complex that mediates ubiquitination and subsequent proteasomal degradation of target proteins. The protein is Armadillo repeat-containing protein 8 (armc8) of Danio rerio (Zebrafish).